The chain runs to 305 residues: 2-oxoacid:ferredoxin oxidoreductase subunit beta (305 aa).

Residues cysteine 12, cysteine 15, and cysteine 46 each contribute to the [4Fe-4S] cluster site. Residues 44–47 (IGCS) and histidine 65 each bind thiamine diphosphate. Aspartate 90 lines the Mg(2+) pocket. 91-92 (GD) contacts thiamine diphosphate. Residues asparagine 118 and valine 120 each coordinate Mg(2+). 122–123 (GL) is a binding site for thiamine diphosphate. A [4Fe-4S] cluster-binding site is contributed by cysteine 197.

Heterodimer composed of an alpha and a beta subunit. It depends on [4Fe-4S] cluster as a cofactor. The cofactor is thiamine diphosphate. Mg(2+) serves as cofactor.

The catalysed reaction is a 2-oxocarboxylate + 2 oxidized [2Fe-2S]-[ferredoxin] + CoA = an acyl-CoA + 2 reduced [2Fe-2S]-[ferredoxin] + CO2 + H(+). In terms of biological role, catalyzes the coenzyme A-dependent oxidative decarboxylation of different 2-oxoacids such as 2-oxoglutarate, pyruvate and 2-oxobutyrate to form their CoA derivatives. This chain is 2-oxoacid:ferredoxin oxidoreductase subunit beta, found in Saccharolobus solfataricus (Sulfolobus solfataricus).